A 562-amino-acid chain; its full sequence is UPF0649 protein C1442.02 (562 aa).

Residues Ser285 and Ser286 each carry the phosphoserine modification. A disordered region spans residues 288–308 (DEEIAKNADVPAEVDNNSTKA).

The protein belongs to the UPF0649 family.

It is found in the cytoplasm. It localises to the nucleus. This Schizosaccharomyces pombe (strain 972 / ATCC 24843) (Fission yeast) protein is UPF0649 protein C1442.02.